Here is a 131-residue protein sequence, read N- to C-terminus: Small ribosomal subunit protein uS11 (131 aa).

This sequence belongs to the universal ribosomal protein uS11 family. Part of the 30S ribosomal subunit. Interacts with proteins S7 and S18. Binds to IF-3.

Located on the platform of the 30S subunit, it bridges several disparate RNA helices of the 16S rRNA. Forms part of the Shine-Dalgarno cleft in the 70S ribosome. The sequence is that of Small ribosomal subunit protein uS11 from Endomicrobium trichonymphae.